We begin with the raw amino-acid sequence, 223 residues long: 2-C-methyl-D-erythritol 4-phosphate cytidylyltransferase (223 aa).

This sequence belongs to the IspD/TarI cytidylyltransferase family. IspD subfamily.

It carries out the reaction 2-C-methyl-D-erythritol 4-phosphate + CTP + H(+) = 4-CDP-2-C-methyl-D-erythritol + diphosphate. It participates in isoprenoid biosynthesis; isopentenyl diphosphate biosynthesis via DXP pathway; isopentenyl diphosphate from 1-deoxy-D-xylulose 5-phosphate: step 2/6. Functionally, catalyzes the formation of 4-diphosphocytidyl-2-C-methyl-D-erythritol from CTP and 2-C-methyl-D-erythritol 4-phosphate (MEP). The protein is 2-C-methyl-D-erythritol 4-phosphate cytidylyltransferase of Prochlorococcus marinus (strain AS9601).